A 932-amino-acid polypeptide reads, in one-letter code: Isoleucine--tRNA ligase (932 aa).

The 'HIGH' region motif lies at 58-68 (PYANGNLHLGH). Residue Glu567 participates in L-isoleucyl-5'-AMP binding. Positions 608–612 (KMSKS) match the 'KMSKS' region motif. Position 611 (Lys611) interacts with ATP. Positions 895, 898, 915, and 918 each coordinate Zn(2+).

It belongs to the class-I aminoacyl-tRNA synthetase family. IleS type 1 subfamily. As to quaternary structure, monomer. Requires Zn(2+) as cofactor.

It localises to the cytoplasm. The enzyme catalyses tRNA(Ile) + L-isoleucine + ATP = L-isoleucyl-tRNA(Ile) + AMP + diphosphate. Its function is as follows. Catalyzes the attachment of isoleucine to tRNA(Ile). As IleRS can inadvertently accommodate and process structurally similar amino acids such as valine, to avoid such errors it has two additional distinct tRNA(Ile)-dependent editing activities. One activity is designated as 'pretransfer' editing and involves the hydrolysis of activated Val-AMP. The other activity is designated 'posttransfer' editing and involves deacylation of mischarged Val-tRNA(Ile). The chain is Isoleucine--tRNA ligase from Azoarcus sp. (strain BH72).